Here is a 132-residue protein sequence, read N- to C-terminus: Histone H2A.2 (132 aa).

Serine 2 bears the N-acetylserine mark. An N6-acetyllysine mark is found at lysine 5 and lysine 8. N6-succinyllysine occurs at positions 14 and 22. The residue at position 106 (glutamine 106) is an N5-methylglutamine. At lysine 120 the chain carries N6-malonyllysine. Lysine 127 is covalently cross-linked (Glycyl lysine isopeptide (Lys-Gly) (interchain with G-Cter in SUMO)). Serine 129 carries the post-translational modification Phosphoserine. Positions 129–130 match the [ST]-Q motif motif; it reads SQ.

The protein belongs to the histone H2A family. The nucleosome is a histone octamer containing two molecules each of H2A, H2B, H3 and H4 assembled in one H3-H4 heterotetramer and two H2A-H2B heterodimers. The octamer wraps approximately 147 bp of DNA. Interacts with NAP1. Phosphorylated to form H2AS128ph (gamma-H2A) in response to DNA double-strand breaks (DSBs) generated by exogenous genotoxic agents and by stalled replication forks. Phosphorylation is dependent on the DNA damage checkpoint kinases MEC1/ATR and TEL1/ATM, spreads on either side of a detected DSB site and may mark the surrounding chromatin for recruitment of proteins required for DNA damage signaling and repair. Gamma-H2A interacts with ARP4, a shared component of the NuA4 histone acetyltransferase complex and the INO80 and SWR1 chromatin remodeling complexes, and serves to recruit first NuA4, mediating histone H4 acetylation, and subsequently the INO80/SWR1 complexes, facilitating DNA resection, to DSB sites. Gamma-H2A is required for sequestering cohesin around the break site, which is important for efficient post-replicative double-strand break repair by homologous recombination, holding the damaged chromatid close to its undamaged sister template. Gamma-H2A is removed from the DNA prior to the strand invasion-primer extension step of the repair process and subsequently dephosphorylated by PPH3, a component of the histone H2A phosphatase complex (HTP-C). Dephosphorylation is necessary for efficient recovery from the DNA damage checkpoint. Post-translationally, N-acetylated by NAT4. In terms of processing, acetylated by ESA1, a component of the NuA4 histone acetyltransferase (HAT) complex, to form H2AK4ac and H2AK7ac. Glutamine methylation at Gln-106 (H2AQ105me) by NOP1 is specifically dedicated to polymerase I. It is present at 35S ribosomal DNA locus and impairs binding of the FACT complex. Post-translationally, sumoylated to from H2AK126su. May lead to transcriptional repression.

It localises to the nucleus. It is found in the chromosome. Its function is as follows. Core component of nucleosome which plays a central role in DNA double strand break (DSB) repair. Nucleosomes wrap and compact DNA into chromatin, limiting DNA accessibility to the cellular machineries which require DNA as a template. Histones thereby play a central role in transcription regulation, DNA repair, DNA replication and chromosomal stability. DNA accessibility is regulated via a complex set of post-translational modifications of histones, also called histone code, and nucleosome remodeling. The polypeptide is Histone H2A.2 (HTA2) (Saccharomyces cerevisiae (strain ATCC 204508 / S288c) (Baker's yeast)).